A 370-amino-acid chain; its full sequence is MTDYLHSPLHAEHEKLGATFTPFGPWEMPLKYDNELEEHRAVRNAAGLFDLSHMGEIWVNGPDAAEFLSYCFISNLTTLKEGKAKYSMICAEDGGIIDDLITYRLEETKFLVVPNAGNADTVWDALNERAEGFDVDLKNESRDVAMIAVQGPKALEILVPLVEDTKQQAVMDLPYYAAMTGKVARKYAFICRTGYTGEDGFELIVYNSDAPELWEELLKAGEEYGIKPCGLAARDSLRLEAGMPLYGNELTRDITPVEAGMSRAFAKKEQDFVGAEVLRQRAEEGPQAVITGLVSSQRRAARAGSEVYVGENKVGTVTSGQPSPTLGHPVALALIDTAAGLEPGAAVEVDIRGKRYPFEVSALPFYKRDK.

It belongs to the GcvT family. The glycine cleavage system is composed of four proteins: P, T, L and H.

It carries out the reaction N(6)-[(R)-S(8)-aminomethyldihydrolipoyl]-L-lysyl-[protein] + (6S)-5,6,7,8-tetrahydrofolate = N(6)-[(R)-dihydrolipoyl]-L-lysyl-[protein] + (6R)-5,10-methylene-5,6,7,8-tetrahydrofolate + NH4(+). The glycine cleavage system catalyzes the degradation of glycine. This is Aminomethyltransferase from Corynebacterium aurimucosum (strain ATCC 700975 / DSM 44827 / CIP 107346 / CN-1) (Corynebacterium nigricans).